Consider the following 147-residue polypeptide: Protein SOB FIVE-LIKE 2 (147 aa).

Positions Ser-18 to Tyr-23 match the SOFL-A motif. The tract at residues His-32 to Lys-147 is disordered. The segment covering Val-37–Met-77 has biased composition (acidic residues). An SOFL-B motif is present at residues Ser-76–Pro-85. Residues Thr-78 to Ser-93 show a composition bias toward polar residues. Residues Asn-96–Lys-106 are compositionally biased toward low complexity. The span at Asn-114–Ala-131 shows a compositional bias: basic and acidic residues.

Belongs to the SOFL plant protein family. In terms of tissue distribution, predominantly expressed in the vascular tissues of seedlings, developing leaves, flowers and siliques, but barely detectable in roots and stems.

It is found in the cytoplasm. The protein resides in the nucleus. Its function is as follows. Involved in cytokinin-mediated development. Together with SOFL2, triggers the endogenous content of specific bioactive cytokinins derived from the biosynthetic intermediates trans-zeatin riboside monophosphate (tZRMP) and N(6)-(Delta(2)-isopentenyl)adenosine monophosphate (iPRMP) such as N-glucosides trans-zeatin 7-glucoside (tZ7G), cis-zeatin 7-glucoside (cZ7G) and N(6)-(Delta(2)-isopentenyl)adenine 7-glucoside (iP7G). The chain is Protein SOB FIVE-LIKE 2 from Arabidopsis thaliana (Mouse-ear cress).